The primary structure comprises 132 residues: Small ribosomal subunit protein uS8 (132 aa).

The protein belongs to the universal ribosomal protein uS8 family. As to quaternary structure, part of the 30S ribosomal subunit. Contacts proteins S5 and S12.

Its function is as follows. One of the primary rRNA binding proteins, it binds directly to 16S rRNA central domain where it helps coordinate assembly of the platform of the 30S subunit. This Bartonella tribocorum (strain CIP 105476 / IBS 506) protein is Small ribosomal subunit protein uS8.